Here is a 401-residue protein sequence, read N- to C-terminus: Haptoglobin (401 aa).

Positions 1–18 (MSALQAVVTLLLCGQLLA) are cleaved as a signal peptide. Sushi domains are found at residues 28 to 83 (DSCP…ECEE) and 85 to 142 (DSCP…ECEA). 3 disulfides stabilise this stretch: Cys-49-Cys-81, Cys-106-Cys-140, and Cys-144-Cys-261. The Peptidase S1 domain occupies 157-399 (IIGGSLDAKG…ILDWVRKTIA (243 aa)). Asn-286 and Asn-316 each carry an N-linked (GlcNAc...) asparagine glycan. Cystine bridges form between Cys-304-Cys-335 and Cys-346-Cys-376. An interaction with CD163 region spans residues 313 to 318 (APKNKT).

The protein belongs to the peptidase S1 family. In terms of assembly, tetramer of two alpha and two beta chains; disulfide-linked. The hemoglobin/haptoglobin complex is composed of a haptoglobin dimer bound to two hemoglobin alpha-beta dimers. Interacts with CD163. Interacts with ERGIC3. In terms of tissue distribution, expressed by the liver and secreted in plasma.

The protein localises to the secreted. The protein resides in the extracellular space. Its function is as follows. As a result of hemolysis, hemoglobin is found to accumulate in the kidney and is secreted in the urine. Haptoglobin captures, and combines with free plasma hemoglobin to allow hepatic recycling of heme iron and to prevent kidney damage. Haptoglobin also acts as an antioxidant, has antibacterial activity and plays a role in modulating many aspects of the acute phase response. Hemoglobin/haptoglobin complexes are rapidly cleared by the macrophage CD163 scavenger receptor expressed on the surface of liver Kupfer cells through an endocytic lysosomal degradation pathway. This chain is Haptoglobin (HP), found in Bos taurus (Bovine).